The primary structure comprises 207 residues: Cilia- and flagella-associated protein 418 (207 aa).

Residues 1-75 (MAEDLDELLD…LINEIFEEPH (75 aa)) are required for interaction with FAM161A.

In terms of assembly, interacts (via N-terminus) with FAM161A (via central region); the interaction is direct. In terms of tissue distribution, expressed in the retina (at protein level).

It is found in the cytoplasm. The protein resides in the photoreceptor inner segment. Functionally, may be involved in photoreceptor outer segment disk morphogenesis. In Bos taurus (Bovine), this protein is Cilia- and flagella-associated protein 418 (CFAP418).